The chain runs to 575 residues: 3-hydroxy-3-methylglutaryl-coenzyme A reductase 1 (575 aa).

The segment covering Met1 to Ala13 has biased composition (basic residues). Positions Met1–Lys25 are disordered. Helical transmembrane passes span Ala29–Ala49 and Glu73–Ile93. Residues Gln97–Glu160 form a linker region. N-linked (GlcNAc...) asparagine glycosylation is present at Asn132. The catalytic stretch occupies residues Asp161 to Ser575. Catalysis depends on Glu254, which acts as the Charge relay system. An N-linked (GlcNAc...) asparagine glycan is attached at Asn318. Active-site charge relay system residues include Lys386 and Asp462. A helical membrane pass occupies residues Leu531 to Ile551. His560 serves as the catalytic Proton donor. Asn564 is a glycosylation site (N-linked (GlcNAc...) asparagine).

The protein belongs to the HMG-CoA reductase family.

The protein resides in the endoplasmic reticulum membrane. It is found in the mitochondrion membrane. It localises to the plastid membrane. The catalysed reaction is (R)-mevalonate + 2 NADP(+) + CoA = (3S)-3-hydroxy-3-methylglutaryl-CoA + 2 NADPH + 2 H(+). Its pathway is metabolic intermediate biosynthesis; (R)-mevalonate biosynthesis; (R)-mevalonate from acetyl-CoA: step 3/3. Catalyzes the synthesis of mevalonate. The specific precursor of all isoprenoid compounds present in plants. In Hevea brasiliensis (Para rubber tree), this protein is 3-hydroxy-3-methylglutaryl-coenzyme A reductase 1 (HMGR1).